The sequence spans 452 residues: Nebulette (452 aa).

Residues 1–26 (MKVPVSGDVKEETEEENVEQEENQEA) form a disordered region. Residues 11 to 23 (EETEEENVEQEEN) show a composition bias toward acidic residues. 12 Nebulin repeats span residues 29–63 (SLKP…KSKD), 64–98 (KCTF…ADLS), 101–135 (LYKD…AEKG), 138–172 (DYTH…GTHT), 173–199 (YTAE…EYKK), 206–240 (KEPS…NEMK), 263–278 (LASD…ENKG), 279–313 (LYHF…KNKG), 315–349 (SMLE…KEIK), 352–386 (SSLD…NEIK), 389–423 (GMEL…TEIK), and 426–452 (GMQV…VRMV).

Interacts (via nebulin repeats 1-5) with DESM (via rod region). Interacts (via SH3 domain) with XIRP2.

Its subcellular location is the cytoplasm. Its function is as follows. Binds to actin and plays an important role in the assembly of the Z-disk. May functionally link sarcomeric actin to the desmin intermediate filaments in the heart muscle sarcomeres. Isoform 2 might play a role in the assembly of focal adhesion. The chain is Nebulette (Nebl) from Mus musculus (Mouse).